Consider the following 400-residue polypeptide: Acetate kinase (400 aa).

N10 provides a ligand contact to Mg(2+). K17 contributes to the ATP binding site. R91 serves as a coordination point for substrate. D150 acts as the Proton donor/acceptor in catalysis. ATP contacts are provided by residues 210 to 214 (HLGNG), 285 to 287 (DCR), and 333 to 337 (GIGEN). E387 provides a ligand contact to Mg(2+).

It belongs to the acetokinase family. Homodimer. Mg(2+) serves as cofactor. Mn(2+) is required as a cofactor.

It localises to the cytoplasm. It catalyses the reaction acetate + ATP = acetyl phosphate + ADP. It functions in the pathway metabolic intermediate biosynthesis; acetyl-CoA biosynthesis; acetyl-CoA from acetate: step 1/2. Functionally, catalyzes the formation of acetyl phosphate from acetate and ATP. Can also catalyze the reverse reaction. The sequence is that of Acetate kinase from Photorhabdus laumondii subsp. laumondii (strain DSM 15139 / CIP 105565 / TT01) (Photorhabdus luminescens subsp. laumondii).